A 111-amino-acid polypeptide reads, in one-letter code: Universal stress protein B (111 aa).

The next 2 helical transmembrane spans lie at 1-21 and 90-110; these read MFST…NMMR and FILT…MLIW.

Belongs to the universal stress protein B family.

The protein resides in the cell inner membrane. This is Universal stress protein B from Photorhabdus laumondii subsp. laumondii (strain DSM 15139 / CIP 105565 / TT01) (Photorhabdus luminescens subsp. laumondii).